The chain runs to 176 residues: dCTP deaminase (176 aa).

Residues Arg99 to Arg104 and Asp115 each bind dCTP. Glu125 functions as the Proton donor/acceptor in the catalytic mechanism. Residue Gln163 participates in dCTP binding.

It belongs to the dCTP deaminase family. Homotrimer.

It catalyses the reaction dCTP + H2O + H(+) = dUTP + NH4(+). It functions in the pathway pyrimidine metabolism; dUMP biosynthesis; dUMP from dCTP (dUTP route): step 1/2. Its function is as follows. Catalyzes the deamination of dCTP to dUTP. This is dCTP deaminase from Pyrobaculum calidifontis (strain DSM 21063 / JCM 11548 / VA1).